The sequence spans 409 residues: Glycosyltransferase GtfC (409 aa).

This sequence belongs to the glycosyltransferase 28 family.

The enzyme catalyses dTDP-beta-L-vancosamine + devancoaminyl-vancomycin = epivancomycin + dTDP + H(+). It carries out the reaction chloroorienticin B + dTDP-beta-L-vancosamine = chloroeremomycin + dTDP + H(+). It participates in antibiotic biosynthesis; vancomycin biosynthesis. Functionally, catalyzes the attachment of dTDP-L-4-epi-vancosamine to chloroorienticin B to form chloroeremomycin in the biosynthesis of glycopeptide antibiotic chloroeremomycin, a member of the vancomycin group of antibiotics. Also able to use dTDP-L-4-epi-vancosamine and devancoaminyl-vancomycin (DVV) to create epivancomycin. Acts downstream of GtfA. This Amycolatopsis orientalis (Nocardia orientalis) protein is Glycosyltransferase GtfC (gtfC).